Consider the following 449-residue polypeptide: 3-phosphoshikimate 1-carboxyvinyltransferase (449 aa).

The tract at residues 1–30 (MSHDSSPQPLTAAPGAPLRGRLRPPGDKSI) is disordered. 3-phosphoshikimate contacts are provided by Lys-28, Ser-29, and Arg-33. A phosphoenolpyruvate-binding site is contributed by Lys-28. Phosphoenolpyruvate contacts are provided by Gly-101 and Arg-129. 4 residues coordinate 3-phosphoshikimate: Ser-175, Gln-177, Asp-330, and Lys-357. A phosphoenolpyruvate-binding site is contributed by Gln-177. The active-site Proton acceptor is the Asp-330. Phosphoenolpyruvate-binding residues include Arg-361 and Arg-405.

The protein belongs to the EPSP synthase family. Monomer.

Its subcellular location is the cytoplasm. The enzyme catalyses 3-phosphoshikimate + phosphoenolpyruvate = 5-O-(1-carboxyvinyl)-3-phosphoshikimate + phosphate. It functions in the pathway metabolic intermediate biosynthesis; chorismate biosynthesis; chorismate from D-erythrose 4-phosphate and phosphoenolpyruvate: step 6/7. Its function is as follows. Catalyzes the transfer of the enolpyruvyl moiety of phosphoenolpyruvate (PEP) to the 5-hydroxyl of shikimate-3-phosphate (S3P) to produce enolpyruvyl shikimate-3-phosphate and inorganic phosphate. This is 3-phosphoshikimate 1-carboxyvinyltransferase from Methylobacterium radiotolerans (strain ATCC 27329 / DSM 1819 / JCM 2831 / NBRC 15690 / NCIMB 10815 / 0-1).